We begin with the raw amino-acid sequence, 106 residues long: Large ribosomal subunit protein eL42 (106 aa).

This sequence belongs to the eukaryotic ribosomal protein eL42 family.

This is Large ribosomal subunit protein eL42 (RPL44) from Kluyveromyces marxianus (Yeast).